A 153-amino-acid chain; its full sequence is Insulin-like growth factor 1 (153 aa).

The tract at residues Gly49–Thr77 is b. Disulfide bonds link Cys54–Cys96, Cys66–Cys109, and Cys95–Cys100. Residues Gly78 to Thr89 form a c region. Positions Gly90–Ala110 are a. Residues Pro111 to Ala118 are d. Positions Arg119–Met153 are cleaved as a propeptide — e peptide. The tract at residues Ser120–Met153 is disordered. Residues Arg125 to Leu138 show a composition bias toward basic and acidic residues. Residues Lys139 to Met153 show a composition bias toward polar residues.

Belongs to the insulin family. Forms a ternary complex with IGFR1 and ITGAV:ITGB3. Forms a ternary complex with IGFR1 and ITGA6:ITGB4. Interacts with SH2D3C isoform 2. Forms a ternary complex with IGFBP3 and ALS.

It localises to the secreted. In terms of biological role, the insulin-like growth factors, isolated from plasma, are structurally and functionally related to insulin but have a much higher growth-promoting activity. May be a physiological regulator of [1-14C]-2-deoxy-D-glucose (2DG) transport and glycogen synthesis in osteoblasts. Stimulates glucose transport in bone-derived osteoblastic (PyMS) cells and is effective at much lower concentrations than insulin, not only regarding glycogen and DNA synthesis but also with regard to enhancing glucose uptake. May play a role in synapse maturation. Ca(2+)-dependent exocytosis of IGF1 is required for sensory perception of smell in the olfactory bulb. Acts as a ligand for IGF1R. Binds to the alpha subunit of IGF1R, leading to the activation of the intrinsic tyrosine kinase activity which autophosphorylates tyrosine residues in the beta subunit thus initiating a cascade of down-stream signaling events leading to activation of the PI3K-AKT/PKB and the Ras-MAPK pathways. Binds to integrins ITGAV:ITGB3 and ITGA6:ITGB4. Its binding to integrins and subsequent ternary complex formation with integrins and IGFR1 are essential for IGF1 signaling. Induces the phosphorylation and activation of IGFR1, MAPK3/ERK1, MAPK1/ERK2 and AKT1. As part of the MAPK/ERK signaling pathway, acts as a negative regulator of apoptosis in cardiomyocytes via promotion of STUB1/CHIP-mediated ubiquitination and degradation of ICER-type isoforms of CREM. The protein is Insulin-like growth factor 1 of Mus musculus (Mouse).